The chain runs to 602 residues: Pro-neuregulin-1, membrane-bound isoform (602 aa).

Residues 1–206 lie on the Extracellular side of the membrane; the sequence is MWATSEGPLQ…MEAEELYQKR (206 aa). Asparagine 21 is a glycosylation site (N-linked (GlcNAc...) asparagine). In terms of domain architecture, Ig-like C2-type spans 29-123; that stretch reads PKLKEMKNQE…DSTKASVIIT (95 aa). Cysteine 49 and cysteine 105 are oxidised to a cystine. N-linked (GlcNAc...) asparagine glycosylation is found at asparagine 113 and asparagine 126. Residues 137–181 form the EGF-like domain; it reads HLTKCDIKQKAFCVNGGECYMVKDLPNPPRYLCRCPNEFTGDRCQ. 3 disulfides stabilise this stretch: cysteine 141–cysteine 155, cysteine 149–cysteine 169, and cysteine 171–cysteine 180. Residues 207-229 form a helical membrane-spanning segment; sequence VLTITGICIALLVVGIMCVVAYC. Residues 230–602 lie on the Cytoplasmic side of the membrane; sequence KTKKQRKKLH…VIANQDPIAV (373 aa). 4 disordered regions span residues 293–366, 391–421, 460–479, and 486–553; these read ETSF…EGNS, MTTP…PVSS, FNSF…PSPL, and EYET…FLSI. Residues 294 to 314 show a composition bias toward low complexity; that stretch reads TSFSTSHYTSTTHHSMTVTQT. Polar residues predominate over residues 315-324; sequence PSHSWSNGHT. The span at 325 to 341 shows a compositional bias: low complexity; sequence ESILSESHSVLVSSSVE. The span at 460–474 shows a compositional bias: polar residues; it reads FNSFHNNPTHESNSL. Residues 504 to 514 show a composition bias toward basic residues; sequence TNSRRVKRTKP. Residues 527-536 are compositionally biased toward low complexity; that stretch reads DTSSQSTSSE.

This sequence belongs to the neuregulin family. Proteolytic cleavage close to the plasma membrane on the external face leads to the release of the soluble growth factor form. In terms of processing, extensive glycosylation precedes the proteolytic cleavage.

The protein localises to the cell membrane. It is found in the secreted. Functionally, direct ligand for the ERBB tyrosine kinase receptors. The multiple isoforms perform diverse functions: cysteine-rich domain containing isoforms (isoform 2-isoform 4) probably regulate the expression of nicotinic acetylcholine receptors at developing interneuronal synapses. Isoform Ig-NRG is required for the initial induction and/or maintenance of the mature levels of acetylcholine receptors at neuromuscular synapses. Binds to ERBB3 and integrins to form a complex which is essential for NRG1-ERBB signaling. The chain is Pro-neuregulin-1, membrane-bound isoform (NRG1) from Gallus gallus (Chicken).